Consider the following 35-residue polypeptide: Photosystem II reaction center protein T (35 aa).

A helical transmembrane segment spans residues 3 to 23; sequence ALVYTFLLVGTLGIIFFAIFF.

This sequence belongs to the PsbT family. In terms of assembly, PSII is composed of 1 copy each of membrane proteins PsbA, PsbB, PsbC, PsbD, PsbE, PsbF, PsbH, PsbI, PsbJ, PsbK, PsbL, PsbM, PsbT, PsbY, PsbZ, Psb30/Ycf12, at least 3 peripheral proteins of the oxygen-evolving complex and a large number of cofactors. It forms dimeric complexes.

It localises to the plastid. It is found in the chloroplast thylakoid membrane. Its function is as follows. Found at the monomer-monomer interface of the photosystem II (PS II) dimer, plays a role in assembly and dimerization of PSII. PSII is a light-driven water plastoquinone oxidoreductase, using light energy to abstract electrons from H(2)O, generating a proton gradient subsequently used for ATP formation. The polypeptide is Photosystem II reaction center protein T (Marchantia polymorpha (Common liverwort)).